The sequence spans 440 residues: Chromosomal replication initiator protein DnaA (440 aa).

Residues 1–74 (MNPSQILENL…VQSGNKAIIN (74 aa)) form a domain I, interacts with DnaA modulators region. The segment at 74–99 (NIQAQSAKQSNKSTKIDIAHIKAQST) is domain II. Positions 100 to 316 (ILNPSFTFES…GIIISLNAYA (217 aa)) are domain III, AAA+ region. Gly146, Gly148, Lys149, and Thr150 together coordinate ATP. Residues 317–440 (TILGQEITLE…KNKILVKSQS (124 aa)) form a domain IV, binds dsDNA region.

The protein belongs to the DnaA family. As to quaternary structure, oligomerizes as a right-handed, spiral filament on DNA at oriC.

The protein localises to the cytoplasm. In terms of biological role, plays an essential role in the initiation and regulation of chromosomal replication. ATP-DnaA binds to the origin of replication (oriC) to initiate formation of the DNA replication initiation complex once per cell cycle. Binds the DnaA box (a 9 base pair repeat at the origin) and separates the double-stranded (ds)DNA. Forms a right-handed helical filament on oriC DNA; dsDNA binds to the exterior of the filament while single-stranded (ss)DNA is stabiized in the filament's interior. The ATP-DnaA-oriC complex binds and stabilizes one strand of the AT-rich DNA unwinding element (DUE), permitting loading of DNA polymerase. After initiation quickly degrades to an ADP-DnaA complex that is not apt for DNA replication. Binds acidic phospholipids. The protein is Chromosomal replication initiator protein DnaA of Campylobacter jejuni subsp. jejuni serotype O:2 (strain ATCC 700819 / NCTC 11168).